Consider the following 686-residue polypeptide: Homoaconitase, mitochondrial (686 aa).

Residues 1–17 (MRVVRCVRRFSASRAVS) constitute a mitochondrion transit peptide. C337, C401, and C404 together coordinate [4Fe-4S] cluster.

Belongs to the aconitase/IPM isomerase family. [4Fe-4S] cluster is required as a cofactor.

The protein resides in the mitochondrion. It catalyses the reaction (2R,3S)-homoisocitrate = cis-homoaconitate + H2O. It participates in amino-acid biosynthesis; L-lysine biosynthesis via AAA pathway; L-alpha-aminoadipate from 2-oxoglutarate: step 3/5. Functionally, catalyzes the reversible hydration of cis-homoaconitate to (2R,3S)-homoisocitrate, a step in the alpha-aminoadipate pathway for lysine biosynthesis. The sequence is that of Homoaconitase, mitochondrial (LYS4) from Eremothecium gossypii (strain ATCC 10895 / CBS 109.51 / FGSC 9923 / NRRL Y-1056) (Yeast).